The sequence spans 372 residues: MEDIRVLIVDDSALMRNLIGKIVDATPGLKIADKAMNGRFALQKLERVAPDVIVLDLEMPEMNGIEFLRELKKQNIKIPVVILSSIAKEGAKVTMDCLELGACDFITKPSGSESANLTTVSETLSKMLLAYGRRHQIETGTRSTDTTNSFSEPFKSTIPKPMTAAEPQKEEKPTPQREHGNIQIIAIGISTGGPNALRQVFASIDKDLPQPIVVVQHMPPGFTKEFALSLDKICPLEVKEAEDGDLIKPGRILIAPGGKHLVVEKRSLAAVAKVIDTEPQSGHKPSVDVLFGSVAKEYQNHALGIIMTGMGKDGAENITKLYTEGSRTIGQDEGSSVVYGMPRVAWEMGGVMEQVSLDNMAAAINRYGKEFA.

The 119-residue stretch at 5 to 123 (RVLIVDDSAL…SANLTTVSET (119 aa)) folds into the Response regulatory domain. Residue Asp-56 is modified to 4-aspartylphosphate. Polar residues predominate over residues 140 to 151 (GTRSTDTTNSFS). The disordered stretch occupies residues 140 to 177 (GTRSTDTTNSFSEPFKSTIPKPMTAAEPQKEEKPTPQR). Residues 167–177 (PQKEEKPTPQR) are compositionally biased toward basic and acidic residues. Positions 178–364 (EHGNIQIIAI…VSLDNMAAAI (187 aa)) constitute a CheB-type methylesterase domain. Residues Ser-190, His-217, and Asp-313 contribute to the active site.

Belongs to the CheB family. Post-translationally, phosphorylated by CheA. Phosphorylation of the N-terminal regulatory domain activates the methylesterase activity.

It is found in the cytoplasm. It catalyses the reaction [protein]-L-glutamate 5-O-methyl ester + H2O = L-glutamyl-[protein] + methanol + H(+). The enzyme catalyses L-glutaminyl-[protein] + H2O = L-glutamyl-[protein] + NH4(+). Functionally, involved in chemotaxis. Part of a chemotaxis signal transduction system that modulates chemotaxis in response to various stimuli. Catalyzes the demethylation of specific methylglutamate residues introduced into the chemoreceptors (methyl-accepting chemotaxis proteins or MCP) by CheR. Also mediates the irreversible deamidation of specific glutamine residues to glutamic acid. This Treponema denticola (strain ATCC 35405 / DSM 14222 / CIP 103919 / JCM 8153 / KCTC 15104) protein is Protein-glutamate methylesterase/protein-glutamine glutaminase.